Consider the following 222-residue polypeptide: Uridine kinase (222 aa).

13–20 (GGSGAGKT) contributes to the ATP binding site.

Belongs to the uridine kinase family.

Its subcellular location is the cytoplasm. The enzyme catalyses uridine + ATP = UMP + ADP + H(+). It catalyses the reaction cytidine + ATP = CMP + ADP + H(+). The protein operates within pyrimidine metabolism; CTP biosynthesis via salvage pathway; CTP from cytidine: step 1/3. It participates in pyrimidine metabolism; UMP biosynthesis via salvage pathway; UMP from uridine: step 1/1. This chain is Uridine kinase, found in Chlamydia pneumoniae (Chlamydophila pneumoniae).